Here is a 224-residue protein sequence, read N- to C-terminus: tRNA (guanine-N(7)-)-methyltransferase (224 aa).

Residues Glu52, Asp77, and Asp126 each coordinate S-adenosyl-L-methionine. The active site involves Asp126. Substrate-binding residues include Lys130 and Asp162.

Belongs to the class I-like SAM-binding methyltransferase superfamily. TrmB family.

The catalysed reaction is guanosine(46) in tRNA + S-adenosyl-L-methionine = N(7)-methylguanosine(46) in tRNA + S-adenosyl-L-homocysteine. The protein operates within tRNA modification; N(7)-methylguanine-tRNA biosynthesis. Catalyzes the formation of N(7)-methylguanine at position 46 (m7G46) in tRNA. This is tRNA (guanine-N(7)-)-methyltransferase from Christiangramia forsetii (strain DSM 17595 / CGMCC 1.15422 / KT0803) (Gramella forsetii).